Reading from the N-terminus, the 134-residue chain is Retinol-binding protein 2 (134 aa).

Lysine 41 and glutamine 109 together coordinate all-trans-retinol.

It belongs to the calycin superfamily. Fatty-acid binding protein (FABP) family. As to expression, expressed in prenatal liver, intestine and lung, and in adult intestine.

The protein localises to the cytoplasm. Its function is as follows. Intracellular transport of retinol. The sequence is that of Retinol-binding protein 2 (Rbp2) from Mus musculus (Mouse).